Here is a 1889-residue protein sequence, read N- to C-terminus: Protein TIC 214 (1889 aa).

A run of 6 helical transmembrane segments spans residues 11–31, 67–87, 88–108, 127–147, 175–195, and 224–244; these read LISLYMTIINSVVMVGLYYGF, FIAGQLMMFISIYYVPLHLAL, GKPHTITVLALPYLLFHFFWN, LSIQCVFLNNLIIQLFNHFIL, VGWLIGHILLMKWVGLVLVWI, and IFSILLFITCVYYLGRIPSPI. The segment covering 255 to 265 has biased composition (acidic residues); it reads PEEVGESEEER. 2 disordered regions span residues 255–303 and 1610–1633; these read PEEV…PSKE and SNQEKDVEEDYDKSDKKKRRKKKQ. Over residues 279-293 the composition is skewed to polar residues; sequence NQKQGTEENTSSSLF.

This sequence belongs to the TIC214 family. In terms of assembly, part of the Tic complex.

The protein resides in the plastid. It localises to the chloroplast inner membrane. In terms of biological role, involved in protein precursor import into chloroplasts. May be part of an intermediate translocation complex acting as a protein-conducting channel at the inner envelope. This Gossypium barbadense (Sea Island cotton) protein is Protein TIC 214.